The sequence spans 539 residues: MAPKTVWGYFFIDYIPEPLQVSDKQRVVELKGEVARLFEDCNCKDVVERMNLVDVVQRLGIDHHFKEQIDTALKNIQGAEFNSSDLHEVSLRFRLLRQHGLWVPADQFDKFRRQEDGSFSSDIADDPKGLLGLYNAASLLIHGEEVLEEALLFARRHLESIRRGGGLHDSPYLSEQVGRSLKIPLPRTLKRLEAVSYIPEYSSADDTTYIHPEILELARLDFNLLQHVHQNELRTVTQWWKGLCDVIGPDYGRDRIVECYFWAFSMYYEEEHARARMILARLIMLASLLDDTFDDRATLQECRELNKAIERWDESDDISLLPECIQKFFLEVIRNFAEFEDELEAHEKYRVAYARKAYQLLSKSYLQEVEWCHQGYTPSFDDHVSVSTASAGIQVLCVGMLVGMGDAATKEVFEWMIGSNNRVVRACAEVTRFMDDMADFKRGKNKTDVATTVECYMKEQNVTGEVAFDKIGSFVEDAWKTLNQAALVGDRALLPVVQRVAGLAMSMMVFFHGKIDRYTDSEHLKETLEDLFVNHVPLC.

Residues Asp-290 and Asp-294 each coordinate Mg(2+). Substrate is bound by residues Asp-290, Asp-294, and Arg-432. The short motif at 290–294 (DDTFD) is the DDXXD motif element.

This sequence belongs to the terpene synthase family. In terms of assembly, monomer. The cofactor is Mg(2+). It depends on Mn(2+) as a cofactor.

The protein resides in the cytoplasm. It carries out the reaction (2E,6E)-farnesyl diphosphate = alpha-copaene + diphosphate. The catalysed reaction is (2E,6E)-farnesyl diphosphate = (+)-germacrene D + diphosphate. The enzyme catalyses (2E,6E)-farnesyl diphosphate = (-)-(E)-beta-caryophyllene + diphosphate. It catalyses the reaction (2E,6E)-farnesyl diphosphate = delta-cadinene + diphosphate. Its pathway is secondary metabolite biosynthesis; terpenoid biosynthesis. In terms of biological role, converts farnesyl diphosphate to the bicyclic olefins alpha-copaene, (E)-beta-caryophyllene, and to the macrocyclic sesquiterpene germacrene D. Also mediates the biosynthesis of minor sesquiterpene hydrocarbons including delta-cadinene. Involved in indirect defense by producing volatile signals attracting natural enemies of herbivores. This chain is Alpha-copaene synthase, found in Zea mays (Maize).